A 234-amino-acid polypeptide reads, in one-letter code: UPF0441 protein plu3956 (234 aa).

2 disordered regions span residues 105–129 (QAGL…QQSG) and 149–234 (SAPS…SVGG). Residues 110-127 (TTTSSTSTNGEAQAQQQQ) show a composition bias toward low complexity. A compositionally biased stretch (polar residues) spans 150-175 (APSQPLFSSKSATSPANGQFVDSTGK). 2 stretches are compositionally biased toward low complexity: residues 188 to 205 (TVPK…TTIT) and 216 to 234 (QSTM…SVGG).

It belongs to the UPF0441 family.

The polypeptide is UPF0441 protein plu3956 (Photorhabdus laumondii subsp. laumondii (strain DSM 15139 / CIP 105565 / TT01) (Photorhabdus luminescens subsp. laumondii)).